The sequence spans 89 residues: Small ribosomal subunit protein uS15 (89 aa).

The protein belongs to the universal ribosomal protein uS15 family. Part of the 30S ribosomal subunit. Forms a bridge to the 50S subunit in the 70S ribosome, contacting the 23S rRNA.

Functionally, one of the primary rRNA binding proteins, it binds directly to 16S rRNA where it helps nucleate assembly of the platform of the 30S subunit by binding and bridging several RNA helices of the 16S rRNA. Its function is as follows. Forms an intersubunit bridge (bridge B4) with the 23S rRNA of the 50S subunit in the ribosome. This is Small ribosomal subunit protein uS15 from Pelodictyon phaeoclathratiforme (strain DSM 5477 / BU-1).